Here is a 190-residue protein sequence, read N- to C-terminus: UPF0301 protein Psyr_0485 (190 aa).

It belongs to the UPF0301 (AlgH) family.

The chain is UPF0301 protein Psyr_0485 from Pseudomonas syringae pv. syringae (strain B728a).